The following is a 539-amino-acid chain: uncharacterized protein (539 aa).

It belongs to the transposase 25 family.

This is an uncharacterized protein from Sinorhizobium fredii (strain NBRC 101917 / NGR234).